The sequence spans 325 residues: Tagatose 1,6-diphosphate aldolase 1 (325 aa).

The protein belongs to the aldolase LacD family.

It catalyses the reaction D-tagatofuranose 1,6-bisphosphate = D-glyceraldehyde 3-phosphate + dihydroxyacetone phosphate. It participates in carbohydrate metabolism; D-tagatose 6-phosphate degradation; D-glyceraldehyde 3-phosphate and glycerone phosphate from D-tagatose 6-phosphate: step 2/2. The polypeptide is Tagatose 1,6-diphosphate aldolase 1 (lacD1) (Streptococcus pyogenes serotype M3 (strain SSI-1)).